An 834-amino-acid polypeptide reads, in one-letter code: Dual specificity calcium/calmodulin-dependent 3',5'-cyclic nucleotide phosphodiesterase 1 (834 aa).

Residues 152-338 (HSHGRDDQQQ…DELSEVQPDA (187 aa)) form a disordered region. Residues 207–222 (THSGPTGPPSNTSSET) are compositionally biased toward low complexity. Over residues 236-252 (TVRESVMEESPSKDPGD) the composition is skewed to basic and acidic residues. The span at 260-301 (STSTLTSQTTTSSSATAEPSAKAAESQAGSAGSSGSCSNPAA) shows a compositional bias: low complexity. Over residues 313 to 322 (WARSMSTNKT) the composition is skewed to polar residues. Residues 364–387 (EKPKFRSVAHAIRAGIFVDRMYRR) form a calmodulin-binding region. Residues 392–786 (ALTAFPPDVV…RIWKEQAVKD (395 aa)) form the PDEase domain. His-469 acts as the Proton donor in catalysis. The Zn(2+) site is built by His-473, His-509, Asp-510, and Asp-617. Mg(2+) is bound at residue Asp-510. 2 disordered regions span residues 720 to 744 (IVIPNSGITPSMDKPRDHRTEAKTT) and 797 to 834 (EEAAAAAAAEAEESKPETETADGEQSEPAAEPADGAAA). A compositionally biased stretch (basic and acidic residues) spans 732-741 (DKPRDHRTEA). Residues 823–834 (EPAAEPADGAAA) are compositionally biased toward low complexity.

This sequence belongs to the cyclic nucleotide phosphodiesterase family. PDE1 subfamily. Requires Zn(2+) as cofactor. Mg(2+) is required as a cofactor. Expressed in the head (at protein level). Expressed in Malpighian tubules. Expressed in neurons in the brain and ventral ganglia with male flies having higher levels of expression in the abdominal ganglia compared to female flies.

It catalyses the reaction a nucleoside 3',5'-cyclic phosphate + H2O = a nucleoside 5'-phosphate + H(+). It carries out the reaction 3',5'-cyclic GMP + H2O = GMP + H(+). The catalysed reaction is 3',5'-cyclic AMP + H2O = AMP + H(+). Its activity is regulated as follows. Type I PDE are activated by the binding of calmodulin in the presence of Ca(2+). Inhibited by zaprinast and sildenafil. Cyclic nucleotide phosphodiesterase with a dual specificity for the second messengers cAMP and cGMP, which are key regulators of many important physiological processes. Required for male fertility and male mating behavior. This is Dual specificity calcium/calmodulin-dependent 3',5'-cyclic nucleotide phosphodiesterase 1 from Drosophila melanogaster (Fruit fly).